The sequence spans 462 residues: Lipase A (462 aa).

An N-terminal signal peptide occupies residues 1–21 (MRVSLRSITSLLAAATAAVLA). A disulfide bond links cysteine 122 and cysteine 294. Catalysis depends on charge relay system residues serine 205, aspartate 355, and histidine 387. Cysteine 371 and cysteine 415 are oxidised to a cystine.

It belongs to the AB hydrolase superfamily. Lipase family. As to quaternary structure, monomer.

Its subcellular location is the secreted. It carries out the reaction a triacylglycerol + H2O = a diacylglycerol + a fatty acid + H(+). Its function is as follows. Hydrolyzes triglycerides, with a preference for substrates with short-chain lengths (C4 to C8). Has the highest activity with tributyrin (C4), followed by tricaproin (C6) and tricaprylin (C8). Can also hydrolyze vinylacetate (C2) and triolein (C18), but with lower efficiency. Has no activity with tripalmitin (C16). The chain is Lipase A from Moesziomyces aphidis (Pseudozyma aphidis).